We begin with the raw amino-acid sequence, 1641 residues long: Vitellogenin-1 (1641 aa).

The signal sequence occupies residues 1-18; that stretch reads MWYLAFLLIIGAYAADHA. The Vitellogenin domain occupies 19–790; that stretch reads WETGNEYHYL…SQDTTVPKSS (772 aa). Cys172 and Cys211 form a disulfide bridge. Residues 322–334 show a composition bias toward polar residues; the sequence is LRQPSVSLNSMEA. Residues 322-372 form a disordered region; the sequence is LRQPSVSLNSMEARSSENSNEENRSDDDRSNFLSNSGEEREYLQSKPTLNE. The segment covering 342-351 has biased composition (basic and acidic residues); it reads EENRSDDDRS. N-linked (GlcNAc...) asparagine glycans are attached at residues Asn344, Asn549, Asn566, Asn831, Asn875, Asn898, Asn1001, Asn1053, Asn1268, Asn1393, Asn1396, Asn1505, and Asn1523. One can recognise a VWFD domain in the interval 1410–1597; it reads ESVCVLDKTH…TYAMTQESCQ (188 aa). Cysteines 1435 and 1596 form a disulfide. The disordered stretch occupies residues 1594-1641; sequence ESCQGPAPENKRKAEQSTCMSRSYRPSDVISDREAGRSSTKNRGWGYH.

Hemolymph.

It localises to the secreted. In terms of biological role, precursor of the egg-yolk proteins that are sources of nutrients during embryonic development. The chain is Vitellogenin-1 from Solenopsis invicta (Red imported fire ant).